A 102-amino-acid polypeptide reads, in one-letter code: Alpha-ketoglutarate dehydrogenase component 4 (102 aa).

Position 2 is an N-acetylglycine (Gly2). Lys4 is subject to N6-succinyllysine. Positions 23–70 are disordered; it reads KFPNRRDKPKLSASEALGSAALPSHSSAISQHSKGSTSPDLLMHQGPP. Residues 33 to 46 show a composition bias toward low complexity; that stretch reads LSASEALGSAALPS. Over residues 47–61 the composition is skewed to polar residues; that stretch reads HSSAISQHSKGSTSP. Ser48, Ser60, and Ser89 each carry phosphoserine.

The protein belongs to the alpha-ketoglutarate dehydrogenase component 4 family. Component of the 2-oxoglutarate dehydrogenase complex (OGDHC), composed of OGDH (2-oxoglutarate dehydrogenase; also called E1 subunit), DLST (dihydrolipoamide succinyltransferase; also called E2 subunit) and DLD (dihydrolipoamide dehydrogenase; also called E3 subunit), and the assembly factor KGD4. Within OGDHC complex, interacts (via N-terminus) with E3 subunit and (via C-terminus) with E2 subunit.

Its subcellular location is the mitochondrion. Its function is as follows. Molecular adapter that is necessary to form a stable 2-oxoglutarate dehydrogenase enzyme complex (OGDHC). Enables the specific recruitment of E3 subunit to E2 subunit in the 2-oxoglutarate dehydrogenase complex (OGDHC). The chain is Alpha-ketoglutarate dehydrogenase component 4 from Mus musculus (Mouse).